Consider the following 226-residue polypeptide: Glutathione peroxidase 3 (226 aa).

Positions 1–24 (MARLLQASCLLSLLLAGFVPQSRG) are cleaved as a signal peptide. The active site involves selenocysteine 73. Residue selenocysteine 73 is a non-standard amino acid, selenocysteine.

This sequence belongs to the glutathione peroxidase family. As to quaternary structure, homotetramer. In terms of tissue distribution, secreted in plasma.

Its subcellular location is the secreted. The catalysed reaction is 2 glutathione + H2O2 = glutathione disulfide + 2 H2O. It carries out the reaction tert-butyl hydroperoxide + 2 glutathione = tert-butanol + glutathione disulfide + H2O. Functionally, protects cells and enzymes from oxidative damage, by catalyzing the reduction of hydrogen peroxide, lipid peroxides and organic hydroperoxide, by glutathione. This chain is Glutathione peroxidase 3, found in Hylobates lar (Lar gibbon).